A 194-amino-acid chain; its full sequence is dITP/XTP pyrophosphatase (194 aa).

8-13 contacts substrate; it reads TSNPGK. Mg(2+) is bound by residues glutamate 38 and aspartate 67. Aspartate 67 acts as the Proton acceptor in catalysis. Substrate is bound by residues serine 68, 152–155, lysine 175, and 180–181; these read FGYD and HR.

The protein belongs to the HAM1 NTPase family. Homodimer. Requires Mg(2+) as cofactor.

It carries out the reaction XTP + H2O = XMP + diphosphate + H(+). The enzyme catalyses dITP + H2O = dIMP + diphosphate + H(+). The catalysed reaction is ITP + H2O = IMP + diphosphate + H(+). Pyrophosphatase that catalyzes the hydrolysis of nucleoside triphosphates to their monophosphate derivatives, with a high preference for the non-canonical purine nucleotides XTP (xanthosine triphosphate), dITP (deoxyinosine triphosphate) and ITP. Seems to function as a house-cleaning enzyme that removes non-canonical purine nucleotides from the nucleotide pool, thus preventing their incorporation into DNA/RNA and avoiding chromosomal lesions. The chain is dITP/XTP pyrophosphatase from Legionella pneumophila (strain Paris).